The following is a 637-amino-acid chain: Nuclear receptor subfamily 2 group C member 1-B (637 aa).

Residues 149–224 (VELCVVCGDK…LGMKQDSVQC (76 aa)) constitute a DNA-binding region (nuclear receptor). 2 NR C4-type zinc fingers span residues 152 to 172 (CVVCGDKASGRHYGAVTCEGC) and 188 to 207 (CRGSKDCVINKHYRNRCQYC). The NR LBD domain maps to 383–624 (CVGSGSNLLP…SIIPYILRME (242 aa)).

Belongs to the nuclear hormone receptor family. NR2 subfamily.

The protein localises to the nucleus. In terms of biological role, orphan nuclear receptor. Binds the IR7 element in the promoter of its own gene in an autoregulatory negative feedback mechanism. Primarily repressor of a broad range of genes. Binds to hormone response elements (HREs) consisting of two 5'-AGGTCA-3' half site direct repeat consensus sequences. This Xenopus laevis (African clawed frog) protein is Nuclear receptor subfamily 2 group C member 1-B (nr2c1-b).